A 391-amino-acid chain; its full sequence is UDP-galactose transporter homolog 1 (391 aa).

Helical transmembrane passes span 3 to 23 (LLQL…WGLL), 52 to 72 (LFLN…YLLV), 126 to 147 (YILI…LRYI), 178 to 198 (YKYA…AFAP), and 207 to 227 (APES…VLDG). Residue N230 is glycosylated (N-linked (GlcNAc...) asparagine). Transmembrane regions (helical) follow at residues 250 to 270 (MMLV…TLPI), 298 to 318 (DIIA…ETLE), 323 to 343 (LTLV…SVVV), and 347 to 367 (ELSK…GIEA).

Belongs to the nucleotide-sugar transporter family. SLC35B subfamily.

It localises to the endoplasmic reticulum membrane. Functionally, may be involved in specific transport of UDP-Gal from the cytosol to the Golgi lumen. Involved in the maintenance of optimal conditions for the folding of secretory pathway proteins in the endoplasmic reticulum. This is UDP-galactose transporter homolog 1 (HUT1) from Mycosarcoma maydis (Corn smut fungus).